The chain runs to 129 residues: Protein GLUTAMINE DUMPER 2 (129 aa).

Topologically, residues 1–34 (MQTMEGRQYNYQDSINASSSMVVPHSPWHSPVPY) are extracellular. A helical transmembrane segment spans residues 35-55 (LFGGLAAMLALICVALLILAC). At 56–129 (SYWRLSGSAE…DHNEEEGRRG (74 aa)) the chain is on the cytoplasmic side. The interval 66 to 89 (RDLEAGDDAKPDNDTNKTKHTEMP) is disordered. Positions 94-98 (VIMAG) match the VIMAG motif. The tract at residues 106–129 (ATPATRSEQSCTCGDHNEEEGRRG) is disordered. Positions 120 to 129 (DHNEEEGRRG) are enriched in basic and acidic residues.

Belongs to the GLUTAMINE DUMPER 1 (TC 9.B.60) family. In terms of tissue distribution, expressed in the vascular tissues.

Its subcellular location is the membrane. Functionally, probable subunit of an amino acid transporter involved in the regulation of the amino acid metabolism. Stimulates amino acid export by activating nonselective amino acid facilitators. This is Protein GLUTAMINE DUMPER 2 (GDU2) from Arabidopsis thaliana (Mouse-ear cress).